The sequence spans 1011 residues: Vacuolar membrane protease (1011 aa).

The Cytoplasmic segment spans residues 1–9; the sequence is MSNPFAFRS. The chain crosses the membrane as a helical span at residues 10–30; the sequence is AQVTFWTTVVYLALLVPLVVI. The Vacuolar segment spans residues 31 to 378; the sequence is NEGVPPVQPD…TFVLFGLRGM (348 aa). N-linked (GlcNAc...) asparagine glycosylation is found at N50 and N106. H159 and D171 together coordinate Zn(2+). Residue E205 is the Proton acceptor of the active site. The Zn(2+) site is built by E206, E231, and H304. N331 carries N-linked (GlcNAc...) asparagine glycosylation. A helical membrane pass occupies residues 379–399; it reads FAWSLTVLIVGPLTLFGMMYL. The Cytoplasmic portion of the chain corresponds to 400 to 439; the sequence is VHKQGKGYAFHTKLRATSDSSSEDGDDEDGEVIRLGGWKG. The chain crosses the membrane as a helical span at residues 440–460; it reads FFRFPFALIVAGALVTGAALL. The Vacuolar segment spans residues 461-471; sequence LRKMNPFIIYS. Residues 472–492 form a helical membrane-spanning segment; it reads SEYAVWAMMISLFYFGFWLIM. At 493 to 505 the chain is on the cytoplasmic side; sequence RGSSYTRPSALHR. Residues 506–526 traverse the membrane as a helical segment; that stretch reads LYVHIWLFILGWVALVFATVL. Residues 527-536 lie on the Vacuolar side of the membrane; the sequence is EDRMRIASGY. A helical membrane pass occupies residues 537 to 557; that stretch reads IFVFWESQVFLATLVAVCELF. Residues 558–682 lie on the Cytoplasmic side of the membrane; the sequence is SLPRKIDFAR…WSGPMVTSTW (125 aa). Polar residues predominate over residues 595-609; sequence EATSPQRAGQSSNSP. 2 disordered regions span residues 595–627 and 650–671; these read EATS…LFRK and IMDS…EGEQ. The span at 610 to 622 shows a compositional bias: acidic residues; the sequence is QEDDEDDVPDEET. A helical membrane pass occupies residues 683 to 703; that stretch reads ILQFLLLGPFMVILGGQVGLL. At 704-719 the chain is on the vacuolar side; that stretch reads LTSAVNQTGVDGSSLL. N709 carries N-linked (GlcNAc...) asparagine glycosylation. Residues 720–740 form a helical membrane-spanning segment; that stretch reads APYLMIAALSAILLMPLSPFI. Over 741–747 the chain is Cytoplasmic; it reads HRVTKHV. Residues 748-768 form a helical membrane-spanning segment; that stretch reads PLFLLAVAFATLIYSLVAFPF. Residues 769-1011 lie on the Vacuolar side of the membrane; that stretch reads SPRAPYKTFF…LVEGSKAFKV (243 aa). N872 carries an N-linked (GlcNAc...) asparagine glycan.

Belongs to the peptidase M28 family. Requires Zn(2+) as cofactor.

It localises to the vacuole membrane. In terms of biological role, may be involved in vacuolar sorting and osmoregulation. This Pyricularia oryzae (strain 70-15 / ATCC MYA-4617 / FGSC 8958) (Rice blast fungus) protein is Vacuolar membrane protease.